The following is a 900-amino-acid chain: Formin-like protein 5 (900 aa).

The chain crosses the membrane as a helical; Signal-anchor span at residues 15–32 (SRLVFWLILFSGLLVITL). The tract at residues 136 to 209 (RNLATKPGSS…PVSPAKKKED (74 aa)) is disordered. Pro residues predominate over residues 160 to 173 (PPRPPTRPKSPPPR). The helical transmembrane segment at 214-234 (IIIAVVVTAVSTFLLAALFFL) threads the bilayer. 2 disordered regions span residues 273–440 (SVKG…DAPK) and 849–900 (ARGR…SDSD). Residues 281 to 304 (HQSFNIYSNQGKMSSFDGSNSDTS) are compositionally biased toward polar residues. Residues 307–316 (LEERLSHEGL) are compositionally biased toward basic and acidic residues. A compositionally biased stretch (low complexity) spans 359 to 368 (FLKVSSKKAS). The segment covering 369 to 429 (APPPPVPAPQ…GPKAPRPPSG (61 aa)) has biased composition (pro residues). Residues 433-865 (ALDDDAPKTK…MARKQGSTAS (433 aa)) form the FH2 domain. Residues 860–876 (QGSTASASSETPRQTPS) are compositionally biased toward polar residues.

Belongs to the formin-like family. Class-I subfamily. Expressed in the endosperm. Localizes to the cell plate, a plant-specific membranous component that is assembled at the plane of cell division.

Its subcellular location is the membrane. In terms of biological role, might be involved in the organization and polarity of the actin cytoskeleton. Interacts with the barbed end of actin filaments and nucleates actin-filament polymerization in vitro. Seems to play a role in cytokinesis. This chain is Formin-like protein 5 (FH5), found in Arabidopsis thaliana (Mouse-ear cress).